We begin with the raw amino-acid sequence, 213 residues long: StAR-related lipid transfer protein 5 (213 aa).

One can recognise an START domain in the interval 1–213 (MDLATAAQVS…LEKAVKKFFG (213 aa)).

Its function is as follows. May be involved in the intracellular transport of sterols or other lipids. May bind cholesterol or other sterols. The protein is StAR-related lipid transfer protein 5 (STARD5) of Bos taurus (Bovine).